A 366-amino-acid chain; its full sequence is Terpene synthase 4 (366 aa).

Positions 91–96 (DDFLER) match the DDxx(x)D/E motif motif. The NDxxSxxxD/E motif signature appears at 241–249 (NDCVSYAKE).

This sequence belongs to the terpene synthase family.

The catalysed reaction is (2E,6E)-farnesyl diphosphate = (1S,2S,4R)-beta-elemene + diphosphate. In terms of biological role, terpene synthase that converts its substrate farnesyl diphosphate (FPP) into the sesquiterpenes bicycloelemene, beta-elemene and 2 yet unidentified sesquiterpenes. In Dictyostelium purpureum (Slime mold), this protein is Terpene synthase 4.